The sequence spans 1027 residues: C2 and GRAM domain-containing protein At5g50170 (1027 aa).

One can recognise a C2 1 domain in the interval 1–103 (MRLYVYILQA…ENQTLLPTWF (103 aa)). Residues 158-167 (SPKDLISSRD) are compositionally biased toward basic and acidic residues. 2 disordered regions span residues 158 to 177 (SPKDLISSRDGKRRKHHDGK) and 201 to 223 (LHDESSVGQSVNSNYEDATDQCS). Residues 168–177 (GKRRKHHDGK) are compositionally biased toward basic residues. Polar residues predominate over residues 206 to 223 (SVGQSVNSNYEDATDQCS). Positions 253–426 (TGGVLVDQKY…LLAKTYKTLD (174 aa)) constitute a VASt 1 domain. A helical transmembrane segment spans residues 452-472 (FLYFWSSSVICAVLLSVYVVV). Residues 516 to 639 (TVHFVQARLH…TADELADLSV (124 aa)) form the C2 2 domain. Residues 693-756 (AFQKLFGLPH…LWEDIDDIQV (64 aa)) form the GRAM domain. A VASt 2 domain is found at 855 to 1018 (MMSKVYTCDL…VIFDLFQKES (164 aa)).

It is found in the membrane. The chain is C2 and GRAM domain-containing protein At5g50170 from Arabidopsis thaliana (Mouse-ear cress).